A 387-amino-acid chain; its full sequence is Lymphocyte transmembrane adapter 1 (387 aa).

At 1-37 (MDVTTSAWSETTRRISEPSTLQGTLGSLDKAEDHSSS) the chain is on the extracellular side. Residues 38–58 (IFSGFAALLAILLVVAVICVL) traverse the membrane as a helical; Signal-anchor for type III membrane protein segment. Topologically, residues 59-387 (WCCGKRKKRQ…VCAAEAGARG (329 aa)) are cytoplasmic. The segment at 114–136 (VSTESLLSRNSDSPSSEHVPSRA) is disordered. The span at 118–129 (SLLSRNSDSPSS) shows a compositional bias: low complexity. Y195 bears the Phosphotyrosine mark. The tract at residues 230–268 (SEEIDEGCGNASDCTSLGSPGTENSDPLSDGEGSSQTSN) is disordered. Over residues 241 to 268 (SDCTSLGSPGTENSDPLSDGEGSSQTSN) the composition is skewed to polar residues. Phosphotyrosine is present on residues Y270 and Y296. Positions 294–387 (RDYENVPPGP…VCAAEAGARG (94 aa)) are disordered. Residues 319 to 329 (DHVEGRTDGPE) are compositionally biased toward basic and acidic residues. Positions 360-369 (PWEDAEETSS) are enriched in acidic residues. Position 375 is a phosphotyrosine (Y375).

As to quaternary structure, when phosphorylated, interacts with GRB2, PIK3R1 and GRAP2. In terms of processing, phosphorylated on tyrosines upon TCR or BCR activation; which leads to the recruitment of GRB2, PIK3R1 and GRAP2.

The protein resides in the cell membrane. Negatively regulates TCR (T-cell antigen receptor)-mediated signaling in T-cells and BCR (B-cell antigen receptor)-mediated signaling in B-cells. The sequence is that of Lymphocyte transmembrane adapter 1 (LAX1) from Bos taurus (Bovine).